The primary structure comprises 653 residues: Beta-galactosidase-1-like protein 3 (653 aa).

Catalysis depends on Glu-227, which acts as the Proton donor. The active-site Nucleophile is the Glu-301.

The protein belongs to the glycosyl hydrolase 35 family.

In Homo sapiens (Human), this protein is Beta-galactosidase-1-like protein 3 (GLB1L3).